A 335-amino-acid chain; its full sequence is Abasic site processing protein HMCES (335 aa).

Cys2 serves as the catalytic Nucleophile. Cys2 is modified (thiazolidine linkage to a ring-opened DNA abasic site). The span at 24–39 (QGGRKWPNWRDGDSDK) shows a compositional bias: basic and acidic residues. Residues 24-51 (QGGRKWPNWRDGDSDKYQPSYNKSPQSN) form a disordered region. A compositionally biased stretch (polar residues) spans 40–51 (YQPSYNKSPQSN). The active site involves Glu129. The disordered stretch occupies residues 284 to 335 (LQNKSPKKEESHSIQSPKLSQFGAPPKKTSAGLMQQWLKKEDGEPSPKRAKK). Residues 321-335 (LKKEDGEPSPKRAKK) are compositionally biased toward basic and acidic residues.

Belongs to the SOS response-associated peptidase family. Post-translationally, ubiquitination of the hmces DNA-protein cross-link by rfwd3 may promotes its degradation.

The protein localises to the chromosome. With respect to regulation, formation and reversal of DNA-protein cross-link depends on DNA context. Catalyzes formation of the thiazolidine linkage in presence of abasic sites in single-stranded DNA. Mediates the reversal of the thiazolidine cross-link in presence of double stranded DNA. In terms of biological role, sensor of abasic sites in single-stranded DNA (ssDNA) required to preserve genome integrity by promoting error-free repair of abasic sites. Acts as an enzyme that recognizes and binds abasic sites in ssDNA at replication forks and chemically modifies the lesion by forming a covalent cross-link with DNA: forms a stable thiazolidine linkage between a ring-opened abasic site and the alpha-amino and sulfhydryl substituents of its N-terminal catalytic cysteine residue. The hmces DNA-protein cross-link is then either reversed or degraded. Hmces is able to catalyze the reversal of its thiazolidine cross-link and cycle between a cross-link and a non-cross-linked state depending on DNA context: mediates self-reversal of the thiazolidine cross-link in double stranded DNA, allowing apex1 to initiate downstream repair of abasic sites. The hmces DNA-protein cross-link can also be degraded by the sprtn metalloprotease following unfolding by the brip1/fancj helicase. Promotes error-free repair of abasic sites by protecting abasic sites from translesion synthesis (TLS) polymerases and endonucleases that are error-prone and would generate mutations and double-strand breaks. Acts as a protease: mediates autocatalytic processing of its N-terminal methionine in order to expose the catalytic cysteine. The hmces DNA-protein cross-link is then either reversed or degraded. According to a model, the HMCES DNA-protein cross-link. This is Abasic site processing protein HMCES from Xenopus tropicalis (Western clawed frog).